The primary structure comprises 401 residues: 8-amino-7-oxononanoate synthase (401 aa).

R19 is a binding site for substrate. 106–107 (GY) is a pyridoxal 5'-phosphate binding site. Residue H131 participates in substrate binding. S176, H204, and T233 together coordinate pyridoxal 5'-phosphate. Position 236 is an N6-(pyridoxal phosphate)lysine (K236). T350 contributes to the substrate binding site.

The protein belongs to the class-II pyridoxal-phosphate-dependent aminotransferase family. BioF subfamily. Homodimer. Pyridoxal 5'-phosphate serves as cofactor.

The catalysed reaction is 6-carboxyhexanoyl-[ACP] + L-alanine + H(+) = (8S)-8-amino-7-oxononanoate + holo-[ACP] + CO2. The protein operates within cofactor biosynthesis; biotin biosynthesis. Its function is as follows. Catalyzes the decarboxylative condensation of pimeloyl-[acyl-carrier protein] and L-alanine to produce 8-amino-7-oxononanoate (AON), [acyl-carrier protein], and carbon dioxide. The sequence is that of 8-amino-7-oxononanoate synthase from Pseudomonas aeruginosa (strain ATCC 15692 / DSM 22644 / CIP 104116 / JCM 14847 / LMG 12228 / 1C / PRS 101 / PAO1).